The following is a 287-amino-acid chain: Thiazole synthase (287 aa).

Catalysis depends on lysine 111, which acts as the Schiff-base intermediate with DXP. 1-deoxy-D-xylulose 5-phosphate is bound by residues glycine 172, 203–204 (AG), and 225–226 (NT). Residues 268–287 (PQEGVISTRPYGSQADEIGS) form a disordered region.

This sequence belongs to the ThiG family. Homotetramer. Forms heterodimers with either ThiH or ThiS.

The protein resides in the cytoplasm. The catalysed reaction is [ThiS sulfur-carrier protein]-C-terminal-Gly-aminoethanethioate + 2-iminoacetate + 1-deoxy-D-xylulose 5-phosphate = [ThiS sulfur-carrier protein]-C-terminal Gly-Gly + 2-[(2R,5Z)-2-carboxy-4-methylthiazol-5(2H)-ylidene]ethyl phosphate + 2 H2O + H(+). It functions in the pathway cofactor biosynthesis; thiamine diphosphate biosynthesis. Its function is as follows. Catalyzes the rearrangement of 1-deoxy-D-xylulose 5-phosphate (DXP) to produce the thiazole phosphate moiety of thiamine. Sulfur is provided by the thiocarboxylate moiety of the carrier protein ThiS. In vitro, sulfur can be provided by H(2)S. In Rhodopirellula baltica (strain DSM 10527 / NCIMB 13988 / SH1), this protein is Thiazole synthase.